We begin with the raw amino-acid sequence, 660 residues long: Pentatricopeptide repeat-containing protein At1g03560, mitochondrial (660 aa).

The transit peptide at 1–12 (MRRFYRKPFSVP) directs the protein to the mitochondrion. PPR repeat units lie at residues 151–185 (NLEC…EFPM), 186–220 (TVSA…GIEP), 221–255 (TLYT…RIKP), 256–290 (DIVT…GHEA), 291–325 (DKIT…GIQV), 326–360 (PPHA…GSKP), 361–395 (NVAI…GFKP), 396–430 (DVVT…GLAI), 431–465 (NSMF…GCTR), 466–496 (DSYC…MEEE), 502–536 (TVYT…GITP), 537–571 (TAAC…GVIL), 574–605 (ACED…GREV), and 606–640 (PGRI…GYER).

The protein belongs to the PPR family. P subfamily.

It is found in the mitochondrion. This is Pentatricopeptide repeat-containing protein At1g03560, mitochondrial from Arabidopsis thaliana (Mouse-ear cress).